The sequence spans 90 residues: Small ribosomal subunit protein uS15c (90 aa).

The protein belongs to the universal ribosomal protein uS15 family. In terms of assembly, part of the 30S ribosomal subunit.

It localises to the plastid. Its subcellular location is the chloroplast. The chain is Small ribosomal subunit protein uS15c (rps15) from Lotus japonicus (Lotus corniculatus var. japonicus).